Reading from the N-terminus, the 147-residue chain is Small ribosomal subunit protein uS5 (147 aa).

The 64-residue stretch at 9 to 72 folds into the S5 DRBM domain; the sequence is FEEVVVNISR…DNAFKNITTV (64 aa).

It belongs to the universal ribosomal protein uS5 family. Part of the 30S ribosomal subunit. Contacts proteins S4 and S8.

In terms of biological role, with S4 and S12 plays an important role in translational accuracy. Located at the back of the 30S subunit body where it stabilizes the conformation of the head with respect to the body. The sequence is that of Small ribosomal subunit protein uS5 from Nitratiruptor sp. (strain SB155-2).